We begin with the raw amino-acid sequence, 1392 residues long: ENHANCER OF AG-4 protein 2 (1392 aa).

The PWWP domain maps to Leu-20–Glu-77. The span at Glu-184 to Ser-194 shows a compositional bias: polar residues. Disordered regions lie at residues Glu-184 to Thr-354, Lys-384 to Gln-428, Lys-575 to Leu-613, and Gln-723 to Leu-766. Basic and acidic residues-rich tracts occupy residues Ser-196–Thr-215, Lys-239–Asn-258, and Leu-311–Ile-345. Polar residues predominate over residues Glu-391–Gly-400. A compositionally biased stretch (basic and acidic residues) spans Ser-401–Ser-417. Composition is skewed to polar residues over residues Lys-591 to Asn-601 and His-725 to Gln-744. The CID domain occupies Glu-771–Gly-912. Disordered regions lie at residues Phe-957–Arg-986, Leu-1014–Pro-1356, and Pro-1369–Ala-1392. Residues Glu-1059–Ser-1129 are compositionally biased toward pro residues. The span at Leu-1157 to Thr-1175 shows a compositional bias: polar residues. Residues Ser-1215–Ser-1225 are compositionally biased toward low complexity. Polar residues-rich tracts occupy residues Glu-1240–Ser-1255 and Ala-1265–Tyr-1284. A compositionally biased stretch (basic and acidic residues) spans Gln-1293–Trp-1306. Polar residues predominate over residues Ser-1311 to Gly-1320.

As to expression, expressed in the inflorescence meristem, floral primordia, inflorescence stem, and floral pedicels. Also detected in the shoot apical meristem, stems, leaves, embryos, and roots.

It localises to the nucleus. Functionally, transcription factor that functions as a repressor of flowering by enhancing the expression of several genes that delay flowering including FLC, FLM/MAF1, MAF2 and SVP. Also acts in the floral homeotic AGAMOUS (AG) pathway, specifically by processing the AGAMOUS pre-mRNA. Functions in association with HUA1 and HEN4 in AG pre-mRNA processing. Involved in all three aspects of the AG functions, the specification of stamen and carpel identities, the control of floral determinacy, and the spatial restriction of AP1 expression. Acts as a transcription regulator that controls anthocyanin accumulation. The protein is ENHANCER OF AG-4 protein 2 of Arabidopsis thaliana (Mouse-ear cress).